Here is a 145-residue protein sequence, read N- to C-terminus: 3-dehydroquinate dehydratase 1 (145 aa).

Tyrosine 24 acts as the Proton acceptor in catalysis. 3 residues coordinate substrate: asparagine 75, histidine 81, and aspartate 88. Catalysis depends on histidine 101, which acts as the Proton donor. Residues 102–103 (IS) and arginine 112 contribute to the substrate site.

Belongs to the type-II 3-dehydroquinase family. Homododecamer.

It catalyses the reaction 3-dehydroquinate = 3-dehydroshikimate + H2O. It participates in metabolic intermediate biosynthesis; chorismate biosynthesis; chorismate from D-erythrose 4-phosphate and phosphoenolpyruvate: step 3/7. Its function is as follows. Catalyzes a trans-dehydration via an enolate intermediate. This Agrobacterium fabrum (strain C58 / ATCC 33970) (Agrobacterium tumefaciens (strain C58)) protein is 3-dehydroquinate dehydratase 1 (aroQ1).